The chain runs to 335 residues: Ubiquinol oxidase 1b, mitochondrial (335 aa).

Residues 1 to 47 (MSSRMAGATLLRHLGPRLFAAEPVYSGLAASARGVMPAAARIFPARM) constitute a mitochondrion transit peptide. Residues 160–180 (ALLLETVAGVPGMVGGMLLHL) form a helical membrane-spanning segment. Fe cation-binding residues include Glu164, Glu203, and His206. A helical membrane pass occupies residues 222–242 (ALVLAAQGVFFNAYFVGYLVS). Glu254, Glu305, and His308 together coordinate Fe cation.

Belongs to the alternative oxidase family. It depends on Fe cation as a cofactor.

It localises to the mitochondrion inner membrane. The catalysed reaction is 2 a ubiquinol + O2 = 2 a ubiquinone + 2 H2O. Its function is as follows. Catalyzes the cyanide-resistant oxidation of ubiquinol and the reduction of molecular oxygen to water, but does not translocate protons and consequently is not linked to oxidative phosphorylation. May increase respiration when the cytochrome respiratory pathway is restricted, or in response to low temperatures. This chain is Ubiquinol oxidase 1b, mitochondrial, found in Oryza sativa subsp. japonica (Rice).